Consider the following 189-residue polypeptide: GTPase KRas (189 aa).

Position 1 is an N-acetylmethionine; in GTPase KRas; alternate (M1). T2 carries the post-translational modification N-acetylthreonine; in GTPase KRas, N-terminally processed. Residues 10-18, 29-35, and 59-60 each bind GTP; these read GAGGVGKSA, VDEYDPT, and AG. The short motif at 32–40 is the Effector region element; it reads YDPTIEDSY. A (Microbial infection) O-linked (Glc) threonine; by P.sordellii toxin TcsL glycan is attached at T35. K104 carries the post-translational modification N6-acetyllysine. 116–119 is a binding site for GTP; it reads NKCD. The segment at 166–185 is hypervariable region; it reads YRLKKISKEEKTPGCVKIKK. Residue K170 forms a Glycyl lysine isopeptide (Lys-Gly) (interchain with G-Cter in ubiquitin) linkage. A lipid anchor (S-palmitoyl cysteine) is attached at C180. Residues K182, K184, and K185 are each lipidated (N6-palmitoyl lysine). C186 bears the Cysteine methyl ester mark. C186 carries S-farnesyl cysteine lipidation. A propeptide spans 187-189 (removed in mature form); it reads IIM.

This sequence belongs to the small GTPase superfamily. Ras family. Interacts with PHLPP. Interacts (active GTP-bound form preferentially) with RGS14. Interacts (when farnesylated) with PDE6D; this promotes dissociation from the cell membrane. Interacts with SOS1. Interacts (when farnesylated) with GPR31. Interacts with RAP1GDS1. Interacts (active GTP-bound form) with both SHOC2 and PP1c (all isoforms) to form a tertiary complex; SHOC2 and PP1c preferably bind M-Ras/MRAS, but they also bind K-Ras/KRAS, N-Ras/NRAS and H-Ras/HRAS. Interacts (GTP-bound form) with MAPKAP1/SIN1; inhibiting K-Ras/KRAS activity. In terms of assembly, interacts with GPR31; in a farnelysation-dependent manner. Post-translationally, acetylation at Lys-104 prevents interaction with guanine nucleotide exchange factors (GEFs). Palmitoylated at Lys-182, Lys-184 and Lys-185. Palmitoylation on lysine residues is promoted by palmitoylation at Cys-180. Lysine-depalmitoylation by SIRT2 promotes its localization to endomembranes in endocytic pathways. In terms of processing, ubiquitinated by the BCR(LZTR1) E3 ubiquitin ligase complex at Lys-170 in a non-degradative manner, leading to inhibit Ras signaling by decreasing Ras association with membranes. Post-translationally, (Microbial infection) Glucosylated at Thr-35 by P.sordellii toxin TcsL.

It is found in the cell membrane. It localises to the endomembrane system. Its subcellular location is the cytoplasm. The protein resides in the cytosol. It catalyses the reaction GTP + H2O = GDP + phosphate + H(+). Its activity is regulated as follows. Alternates between an inactive form bound to GDP and an active form bound to GTP. Activated by a guanine nucleotide-exchange factor (GEF) and inactivated by a GTPase-activating protein (GAP). Interaction with SOS1 promotes exchange of bound GDP to GTP. In terms of biological role, ras proteins bind GDP/GTP and possess intrinsic GTPase activity. Plays an important role in the regulation of cell proliferation. Plays a role in promoting oncogenic events by inducing transcriptional silencing of tumor suppressor genes (TSGs) in colorectal cancer (CRC) cells in a ZNF304-dependent manner. This is GTPase KRas (KRAS) from Homo sapiens (Human).